Consider the following 128-residue polypeptide: Large ribosomal subunit protein mL51 (128 aa).

The transit peptide at 1 to 31 (MAGNLLSGAGRRLWDWVPLACRSFSLGVPRL) directs the protein to the mitochondrion.

The protein belongs to the mitochondrion-specific ribosomal protein mL51 family. In terms of assembly, component of the mitochondrial large ribosomal subunit (mt-LSU). Mature mammalian 55S mitochondrial ribosomes consist of a small (28S) and a large (39S) subunit. The 28S small subunit contains a 12S ribosomal RNA (12S mt-rRNA) and 30 different proteins. The 39S large subunit contains a 16S rRNA (16S mt-rRNA), a copy of mitochondrial valine transfer RNA (mt-tRNA(Val)), which plays an integral structural role, and 52 different proteins. Interacts with OXA1L.

Its subcellular location is the mitochondrion. The sequence is that of Large ribosomal subunit protein mL51 (MRPL51) from Homo sapiens (Human).